We begin with the raw amino-acid sequence, 346 residues long: Histidinol-phosphate aminotransferase (346 aa).

An N6-(pyridoxal phosphate)lysine modification is found at Lys209.

The protein belongs to the class-II pyridoxal-phosphate-dependent aminotransferase family. Histidinol-phosphate aminotransferase subfamily. Homodimer. Pyridoxal 5'-phosphate serves as cofactor.

The catalysed reaction is L-histidinol phosphate + 2-oxoglutarate = 3-(imidazol-4-yl)-2-oxopropyl phosphate + L-glutamate. The protein operates within amino-acid biosynthesis; L-histidine biosynthesis; L-histidine from 5-phospho-alpha-D-ribose 1-diphosphate: step 7/9. This chain is Histidinol-phosphate aminotransferase, found in Vibrio cholerae serotype O1 (strain ATCC 39315 / El Tor Inaba N16961).